We begin with the raw amino-acid sequence, 392 residues long: Alaserpin (392 aa).

The N-terminal stretch at 1-16 is a signal peptide; sequence MKIIMCIFGLAALAMA. An N-linked (GlcNAc...) asparagine glycan is attached at Asn85.

It belongs to the serpin family. As to expression, hemolymph.

Its subcellular location is the secreted. The protein resides in the extracellular space. Inhibits elastase. The protein is Alaserpin of Manduca sexta (Tobacco hawkmoth).